The chain runs to 215 residues: Adenylate kinase (215 aa).

Residue 10–15 (GAGKGT) coordinates ATP. An NMP region spans residues 30 to 59 (STGDMLRAAIKAGTPLGLEAKKIIDEGGLV). AMP is bound by residues Thr31, Arg36, 57 to 59 (GLV), 85 to 88 (GFPR), and Gln92. The tract at residues 122–159 (GRRVHLASGRTYHVTYNPPKTEGKDDVTGEDLIQRDDD) is LID. Residues Arg123 and 132 to 133 (TY) contribute to the ATP site. Positions 156 and 167 each coordinate AMP. Position 200 (Gln200) interacts with ATP.

Belongs to the adenylate kinase family. In terms of assembly, monomer.

The protein localises to the cytoplasm. It carries out the reaction AMP + ATP = 2 ADP. It functions in the pathway purine metabolism; AMP biosynthesis via salvage pathway; AMP from ADP: step 1/1. Functionally, catalyzes the reversible transfer of the terminal phosphate group between ATP and AMP. Plays an important role in cellular energy homeostasis and in adenine nucleotide metabolism. The sequence is that of Adenylate kinase from Neisseria gonorrhoeae (strain ATCC 700825 / FA 1090).